The primary structure comprises 210 residues: Large ribosomal subunit protein uL3 (210 aa).

Positions 125–151 are disordered; it reads RHGQSRGPMSHGSRYHRRPGSMGPVAP.

This sequence belongs to the universal ribosomal protein uL3 family. Part of the 50S ribosomal subunit. Forms a cluster with proteins L14 and L19.

One of the primary rRNA binding proteins, it binds directly near the 3'-end of the 23S rRNA, where it nucleates assembly of the 50S subunit. This is Large ribosomal subunit protein uL3 from Bacillus cereus (strain ATCC 14579 / DSM 31 / CCUG 7414 / JCM 2152 / NBRC 15305 / NCIMB 9373 / NCTC 2599 / NRRL B-3711).